The sequence spans 214 residues: GTP-binding nuclear protein GSP1/Ran (214 aa).

The region spanning 4–168 is the Small GTPase Ran-type domain; the sequence is EVAAFKLVLV…LWLARKLAGN (165 aa). 15 to 22 serves as a coordination point for GTP; it reads DGGTGKTT. A switch-I region spans residues 34–42; that stretch reads NRYNATLGV. Residues G65, 119–122, and 147–149 contribute to the GTP site; these read NKVD and SAK. Residues 65 to 81 are switch-II; sequence GQEKFGGLRDGYYINGQ.

This sequence belongs to the small GTPase superfamily. Ran family. In terms of assembly, found in a nuclear export complex with RanGTP, exportin and pre-miRNA.

The protein resides in the nucleus. GTP-binding protein involved in nucleocytoplasmic transport. Required for the import of protein into the nucleus and also for RNA export. Involved in chromatin condensation and control of cell cycle. This Yarrowia lipolytica (strain CLIB 122 / E 150) (Yeast) protein is GTP-binding nuclear protein GSP1/Ran (GSP1).